A 100-amino-acid polypeptide reads, in one-letter code: NADH-quinone oxidoreductase subunit K 1 (100 aa).

3 consecutive transmembrane segments (helical) span residues 4-24 (LHSY…GVLV), 29-49 (IVIF…FIAL), and 60-80 (IFVF…LALM).

It belongs to the complex I subunit 4L family. In terms of assembly, NDH-1 is composed of 14 different subunits. Subunits NuoA, H, J, K, L, M, N constitute the membrane sector of the complex.

It localises to the cell inner membrane. The enzyme catalyses a quinone + NADH + 5 H(+)(in) = a quinol + NAD(+) + 4 H(+)(out). Its function is as follows. NDH-1 shuttles electrons from NADH, via FMN and iron-sulfur (Fe-S) centers, to quinones in the respiratory chain. The immediate electron acceptor for the enzyme in this species is believed to be ubiquinone. Couples the redox reaction to proton translocation (for every two electrons transferred, four hydrogen ions are translocated across the cytoplasmic membrane), and thus conserves the redox energy in a proton gradient. This chain is NADH-quinone oxidoreductase subunit K 1, found in Geobacter sulfurreducens (strain ATCC 51573 / DSM 12127 / PCA).